A 296-amino-acid polypeptide reads, in one-letter code: Ribosomal RNA small subunit methyltransferase A (296 aa).

6 residues coordinate S-adenosyl-L-methionine: asparagine 30, leucine 32, glycine 57, glutamate 78, aspartate 103, and asparagine 128.

The protein belongs to the class I-like SAM-binding methyltransferase superfamily. rRNA adenine N(6)-methyltransferase family. RsmA subfamily.

The protein localises to the cytoplasm. The enzyme catalyses adenosine(1518)/adenosine(1519) in 16S rRNA + 4 S-adenosyl-L-methionine = N(6)-dimethyladenosine(1518)/N(6)-dimethyladenosine(1519) in 16S rRNA + 4 S-adenosyl-L-homocysteine + 4 H(+). Specifically dimethylates two adjacent adenosines (A1518 and A1519) in the loop of a conserved hairpin near the 3'-end of 16S rRNA in the 30S particle. May play a critical role in biogenesis of 30S subunits. This chain is Ribosomal RNA small subunit methyltransferase A, found in Macrococcus caseolyticus (strain JCSC5402) (Macrococcoides caseolyticum).